Consider the following 414-residue polypeptide: MYRRSVGVLFVGRNTRWISSTIRCGTSATRPIRSNALNTDSDNASVRVPVGNSTEVENATSQLTGTSGKRRKGNRKRITEFKDALNLGPSFADFVSGKASKMILDPLEKARQNTEEAKKLPRWLKVPIPKGTNYHKLKGDVKELGLSTVCEEARCPNIGECWGGKDKSKATATIMLLGDTCTRGCRFCSVKTNRTPSKPDPMEPENTAEAIKRWGLGYVVLTTVDRDDLVDGGANHLAETVRKIKQKAPNTLVETLSGDFRGDLKMVDIMAQCGLDVYAHNLETVESLTPHVRDRRATYRQSLSVLERAKATVPSLITKTSIMLGLGETDEQITQTLKDLRNIQCDVVTFGQYMRPTKRHMKVVEYVKPEKFDYWKERALEMGFLYCASGPLVRSSYKAGEAFIENVLKKRNMK.

A mitochondrion-targeting transit peptide spans 1–18 (MYRRSVGVLFVGRNTRWI). Polar residues predominate over residues 51–67 (GNSTEVENATSQLTGTS). The disordered stretch occupies residues 51 to 75 (GNSTEVENATSQLTGTSGKRRKGNR). [4Fe-4S] cluster contacts are provided by cysteine 150, cysteine 155, cysteine 161, cysteine 181, cysteine 185, cysteine 188, and serine 396. The region spanning 164–385 (GKDKSKATAT…KERALEMGFL (222 aa)) is the Radical SAM core domain.

The protein belongs to the radical SAM superfamily. Lipoyl synthase family. Requires [4Fe-4S] cluster as cofactor.

It is found in the mitochondrion. The enzyme catalyses [[Fe-S] cluster scaffold protein carrying a second [4Fe-4S](2+) cluster] + N(6)-octanoyl-L-lysyl-[protein] + 2 oxidized [2Fe-2S]-[ferredoxin] + 2 S-adenosyl-L-methionine + 4 H(+) = [[Fe-S] cluster scaffold protein] + N(6)-[(R)-dihydrolipoyl]-L-lysyl-[protein] + 4 Fe(3+) + 2 hydrogen sulfide + 2 5'-deoxyadenosine + 2 L-methionine + 2 reduced [2Fe-2S]-[ferredoxin]. The protein operates within protein modification; protein lipoylation via endogenous pathway; protein N(6)-(lipoyl)lysine from octanoyl-[acyl-carrier-protein]: step 2/2. Functionally, catalyzes the radical-mediated insertion of two sulfur atoms into the C-6 and C-8 positions of the octanoyl moiety bound to the lipoyl domains of lipoate-dependent enzymes, thereby converting the octanoylated domains into lipoylated derivatives. The chain is Lipoyl synthase, mitochondrial from Saccharomyces cerevisiae (strain RM11-1a) (Baker's yeast).